Here is a 335-residue protein sequence, read N- to C-terminus: Karyogamy protein KAR4 (335 aa).

The interval 1–25 (MAFQDPTYDQNKSRHINNSHLQGPN) is disordered. Polar residues predominate over residues 16 to 25 (INNSHLQGPN).

This sequence belongs to the MT-A70-like family. In terms of assembly, component of the MIS (mRNA N6-methyladenosine (m6A) methylation) complex, at least composed of IME4, KAR4, MUM2, SLZ1, and VIR1. Interacts with VIR1.

Its subcellular location is the nucleus. The protein resides in the cytoplasm. Component of the MIS complex, a complex that mediates N6-methyladenosine (m6A) methylation of meiotic mRNAs and is required for initiation of meiosis, progression through the meiotic divisions and sporulation. May assist STE12 in the pheromone-dependent expression of KAR3 and CIK1. This is Karyogamy protein KAR4 (KAR4) from Saccharomyces cerevisiae (strain ATCC 204508 / S288c) (Baker's yeast).